Here is a 179-residue protein sequence, read N- to C-terminus: ATP-dependent protease subunit HslV (179 aa).

Residue Thr7 is part of the active site. Residues Gly162, Cys165, and Thr168 each contribute to the Na(+) site.

The protein belongs to the peptidase T1B family. HslV subfamily. In terms of assembly, a double ring-shaped homohexamer of HslV is capped on each side by a ring-shaped HslU homohexamer. The assembly of the HslU/HslV complex is dependent on binding of ATP.

It localises to the cytoplasm. The catalysed reaction is ATP-dependent cleavage of peptide bonds with broad specificity.. Allosterically activated by HslU binding. Protease subunit of a proteasome-like degradation complex believed to be a general protein degrading machinery. The sequence is that of ATP-dependent protease subunit HslV from Teredinibacter turnerae (strain ATCC 39867 / T7901).